The chain runs to 712 residues: Autophagy-related protein 13 (712 aa).

Disordered regions lie at residues 388-443 (AGST…ETPP) and 568-611 (GSVG…DDDE). The span at 402–415 (SSVGSGSKYSSSFG) shows a compositional bias: low complexity. An ATG17-binding region spans residues 412 to 420 (SSFGRIRRH). Positions 424–439 (RRSESIDRTAKPRKSN) are enriched in basic and acidic residues. The interval 441-500 (TPPEDLLEFVKLLEDKKELNMKPSTILPQQDISSSLIKFQSMKPNNDTLSDNLSMSMSID) is ATG1-binding. The span at 576–585 (TNEDSKEDED) shows a compositional bias: acidic residues.

Belongs to the ATG13 family. Fungi subfamily. Hypophosphorylated form interacts with ATG1 to form the ATG1-ATG13 kinase complex. The ATG1-ATG13 complex interacts with the ATG17-ATG29-ATG31 complex through direct interaction with ATG17. Interacts with VAC8. Post-translationally, hyperphosphorylated under nutrient-rich conditions. Starvation and TOR inactivation results in ATG13 partial dephosphorylation leading to ATG1-binding. Dephosphorylation induces ATG17-binding.

Its subcellular location is the cytoplasm. The protein localises to the preautophagosomal structure. Functionally, activates the ATG1 kinase in a nutritional condition dependent manner through the TOR pathway, leading to autophagy. Involved in ATG9 and ATG23 cycling through the pre-autophagosomal structure. Also involved in cytoplasm to vacuole transport (Cvt) and more specifically in Cvt vesicle formation. Seems to play a role in the switching machinery regulating the conversion between the Cvt pathway and autophagy. Finally, ATG13 is also required for glycogen storage during stationary phase. In Kluyveromyces marxianus (strain DMKU3-1042 / BCC 29191 / NBRC 104275) (Yeast), this protein is Autophagy-related protein 13.